Consider the following 316-residue polypeptide: Thiamine-monophosphate kinase (316 aa).

Mg(2+) is bound by residues aspartate 26, threonine 49, and aspartate 50. Aspartate 57 contacts substrate. A Mg(2+)-binding site is contributed by aspartate 79. Residues tyrosine 109, 126 to 127 (GD), and arginine 151 contribute to the ATP site. Aspartate 127 serves as a coordination point for Mg(2+). Position 198 (aspartate 198) interacts with Mg(2+). Serine 200 contributes to the ATP binding site. Aspartate 201 is a Mg(2+) binding site. Residues glutamate 251 and phenylalanine 305 each contribute to the substrate site.

It belongs to the thiamine-monophosphate kinase family.

It catalyses the reaction thiamine phosphate + ATP = thiamine diphosphate + ADP. The protein operates within cofactor biosynthesis; thiamine diphosphate biosynthesis; thiamine diphosphate from thiamine phosphate: step 1/1. Its function is as follows. Catalyzes the ATP-dependent phosphorylation of thiamine-monophosphate (TMP) to form thiamine-pyrophosphate (TPP), the active form of vitamin B1. This Rhodopirellula baltica (strain DSM 10527 / NCIMB 13988 / SH1) protein is Thiamine-monophosphate kinase.